Consider the following 214-residue polypeptide: uncharacterized protein (214 aa).

Functionally, URF2 product may be involved in the transfer of iron-sulfur clusters to the NADH dehydrogenase complex. It may also be required for the assembly of the NADH dehydrogenase complex. This is an uncharacterized protein from Paracoccus denitrificans.